Consider the following 50-residue polypeptide: DCASGPCCRDCKFLKEGTICKRARGDNMDDYCNGKTCDCPRNPHKGEHDP.

Positions 1–47 constitute a Disintegrin domain; it reads DCASGPCCRDCKFLKEGTICKRARGDNMDDYCNGKTCDCPRNPHKGE. Intrachain disulfides connect Cys2-Cys11, Cys7-Cys32, Cys8-Cys37, and Cys20-Cys39. The short motif at 24–26 is the Cell attachment site element; the sequence is RGD.

This sequence belongs to the venom metalloproteinase (M12B) family. P-II subfamily. P-IIa sub-subfamily. As to quaternary structure, monomer (disintegrin). As to expression, expressed by the venom gland.

It is found in the secreted. Functionally, inhibits ADP-induced human platelet aggregation. The chain is Disintegrin pyramidin-A from Echis pyramidum leakeyi (Leakey's carpet viper).